We begin with the raw amino-acid sequence, 892 residues long: NACHT, LRR and PYD domains-containing protein 6 (892 aa).

The Pyrin domain maps to 1-103 (MDQPEAPCSS…AAQLQERRLQ (103 aa)). The disordered stretch occupies residues 158-181 (APEEAMGPAEEPEPGRARRSDTHT). A compositionally biased stretch (basic and acidic residues) spans 170–181 (EPGRARRSDTHT). The 318-residue stretch at 196 to 513 (LTVVLQGPAG…EFLAALSYLL (318 aa)) folds into the NACHT domain. 202-209 (GPAGIGKT) contributes to the ATP binding site. The disordered stretch occupies residues 352-356 (KDKKK). The stretch at 462–487 (EKELEQLELRGSKVQTLFLSKKELPG) is one LRR 1 repeat. The disordered stretch occupies residues 590–614 (APEVTEGAKGLEDTEEPEEEEEGEE). The span at 602 to 614 (DTEEPEEEEEGEE) shows a compositional bias: acidic residues. LRR repeat units lie at residues 727–747 (LCHLSSLTLSHCKLPDAVCRD), 755–778 (APALTELGLLHNRLSEAGLRMLSE), 811–834 (SPALTTLDLSGCQLPAPMVTYLCA), and 845–868 (TLSLASVELSEQSLQELQAVKRAK).

Belongs to the NLRP family. In terms of assembly, homomultimer; forms the NLRP6 inflammasome polymeric complex, a filament composed of homopolymers in response to pathogens and other damage-associated signals. The core of NLRP6 inflammasomes consists of a signal sensor component (NLRP6), an adapter (PYCARD/ASC), which recruits effector pro-inflammatory caspases (CASP1 and CASP4). Interacts (via pyrin domain) with PYCARD/ASC (via pyrin domain); interaction takes place following NLRP6 activation and formation of liquid-liquid phase separation (LLPS), initiating nucleation which greatly enhances further addition of soluble PYCARD/ASC molecules to the speck in a prion-like polymerization process. Clustered PYCARD/ASC nucleates the formation of CASP1 (or possibly CASP4) filaments through the interaction of their respective CARD domains, acting as a platform for CASP1 polymerization. CASP1 filament formation increases local enzyme concentration, resulting in trans-autocleavage and activation. Active CASP1 then processes IL1B and IL18 precursors, leading to the release of mature cytokines in the extracellular milieu and inflammatory response. Interacts with DHX15. In terms of processing, polyubiquitinated with 'Lys-63'-linked chains, promoting the interaction with PYCARD/ASC and formation of the NLRP6 inflammasome. Deubiquitination by CYLD decreases the interaction with PYCARD/ASC. In terms of tissue distribution, expressed in peripheral blood leukocytes, predominantly in granulocytes and, at lower levels, in CD4(+) and CD8(+) T-cells. Expressed in colonic myofibroblasts (at protein level).

The protein localises to the cytoplasm. It localises to the cytosol. It is found in the inflammasome. The protein resides in the cell membrane. Its subcellular location is the nucleus membrane. In terms of biological role, acts as the sensor component of the NLRP6 inflammasome, which mediates inflammasome activation in response to various pathogen-associated signals, leading to maturation and secretion of IL1B and IL18. Inflammasomes are supramolecular complexes that assemble in the cytosol in response to pathogens and other damage-associated signals and play critical roles in innate immunity and inflammation. Acts as a recognition receptor (PRR): recognizes and binds specific pathogens and other damage-associated signals, such as lipoteichoic acid (LTA), a cell-wall component of Gram-positive bacteria, or double stranded RNA (dsRNA). May also recognize and bind lipopolysaccharide (LPS), a major component of the outer membrane of Gram-negative bacteria; however, LPS is probably not a major activator of the NLRP6 inflammasome. Following LTA- or dsRNA-binding, NLRP6 undergoes liquid-liquid phase separation (LLPS), enhancing multivalent interactions, an essential step for the formation of the NLRP6 inflammasome polymeric complex. The NLRP6 inflammasome acts by promoting recruitment of effector pro-inflammatory caspases (CASP1 and/or CASP4) that catalyze maturation and secretion of IL1B and IL18 in the extracellular milieu. The NLRP6 inflammasome plays a central role in the maintenance of epithelial integrity and host defense against microbial infections in the intestine. Required to restrict infection against Gram-positive bacteria by recognizing lipoteichoic acid (LTA), leading to recruitment of CASP4 and CASP1, and subsequent maturation and secretion of IL1B and IL18. Involved in intestinal antiviral innate immunity together with DHX15: recognizes and binds viral dsRNA to restrict infection by enteric viruses through the interferon pathway and GSDMD-dependent release of IL18. Required to prevent infection by the apicomplexan parasite Cryptosporidium in enterocytes by promoting GSDMD-dependent release of IL18. The NLRP6 inflammasome may also regulate the gut microbiota composition by acting as a sensor of microbiota-associated metabolites to form a PYCARD/ASC-dependent inflammasome for downstream IL18 release and secretion of antimicrobial peptides. Essential for gut mucosal self-renewal and proliferation. Regulate mucus secretion in an inflammasome- and autophagy-dependent manner to prevent invasion by enteric bacteria,. During systemic bacterial infections, the NLRP6 inflammasome negatively regulates neutrophil recruitment and neutrophil extracellular traps (NETs) formation. May promote peripheral nerve recovery following injury via an inflammasome-independent mechanism. In Homo sapiens (Human), this protein is NACHT, LRR and PYD domains-containing protein 6.